The sequence spans 202 residues: Indolepyruvate oxidoreductase subunit IorB (202 aa).

In terms of assembly, heterodimer of the IorA and IorB subunits.

The catalysed reaction is indole-3-pyruvate + 2 oxidized [2Fe-2S]-[ferredoxin] + CoA = (indol-3-yl)acetyl-CoA + 2 reduced [2Fe-2S]-[ferredoxin] + CO2 + H(+). In terms of biological role, catalyzes the ferredoxin-dependent oxidative decarboxylation of arylpyruvates. This Thermococcus kodakarensis (strain ATCC BAA-918 / JCM 12380 / KOD1) (Pyrococcus kodakaraensis (strain KOD1)) protein is Indolepyruvate oxidoreductase subunit IorB (iorB).